A 168-amino-acid polypeptide reads, in one-letter code: Transcriptional regulator MraZ (168 aa).

2 SpoVT-AbrB domains span residues 8–51 (EYNQ…GGDR) and 90–140 (ALNM…KADT).

This sequence belongs to the MraZ family. As to quaternary structure, forms oligomers.

Its subcellular location is the cytoplasm. It is found in the nucleoid. The protein is Transcriptional regulator MraZ of Cereibacter sphaeroides (strain ATCC 17029 / ATH 2.4.9) (Rhodobacter sphaeroides).